A 434-amino-acid polypeptide reads, in one-letter code: Enolase (434 aa).

Gln-168 is a (2R)-2-phosphoglycerate binding site. Glu-210 functions as the Proton donor in the catalytic mechanism. Residues Asp-247, Glu-292, and Asp-319 each coordinate Mg(2+). (2R)-2-phosphoglycerate-binding residues include Lys-344, Arg-373, Ser-374, and Lys-395. Lys-344 acts as the Proton acceptor in catalysis.

This sequence belongs to the enolase family. Mg(2+) serves as cofactor.

Its subcellular location is the cytoplasm. The protein localises to the secreted. The protein resides in the cell surface. It catalyses the reaction (2R)-2-phosphoglycerate = phosphoenolpyruvate + H2O. The protein operates within carbohydrate degradation; glycolysis; pyruvate from D-glyceraldehyde 3-phosphate: step 4/5. Catalyzes the reversible conversion of 2-phosphoglycerate (2-PG) into phosphoenolpyruvate (PEP). It is essential for the degradation of carbohydrates via glycolysis. The sequence is that of Enolase from Endomicrobium trichonymphae.